The primary structure comprises 77 residues: Putative defensin-like protein 118 (77 aa).

Residues methionine 1–glycine 25 form the signal peptide. 4 disulfide bridges follow: cysteine 29-cysteine 75, cysteine 39-cysteine 58, cysteine 44-cysteine 69, and cysteine 48-cysteine 71.

The protein belongs to the DEFL family.

Its subcellular location is the secreted. The chain is Putative defensin-like protein 118 (LCR52) from Arabidopsis thaliana (Mouse-ear cress).